A 404-amino-acid polypeptide reads, in one-letter code: NADH-quinone oxidoreductase subunit D 2 (404 aa).

The protein belongs to the complex I 49 kDa subunit family. In terms of assembly, NDH-1 is composed of 14 different subunits. Subunits NuoB, C, D, E, F, and G constitute the peripheral sector of the complex.

The protein localises to the cell inner membrane. The catalysed reaction is a quinone + NADH + 5 H(+)(in) = a quinol + NAD(+) + 4 H(+)(out). NDH-1 shuttles electrons from NADH, via FMN and iron-sulfur (Fe-S) centers, to quinones in the respiratory chain. The immediate electron acceptor for the enzyme in this species is believed to be ubiquinone. Couples the redox reaction to proton translocation (for every two electrons transferred, four hydrogen ions are translocated across the cytoplasmic membrane), and thus conserves the redox energy in a proton gradient. This is NADH-quinone oxidoreductase subunit D 2 from Sinorhizobium medicae (strain WSM419) (Ensifer medicae).